Here is a 304-residue protein sequence, read N- to C-terminus: Acetyl-coenzyme A carboxylase carboxyl transferase subunit beta (304 aa).

Residues 25-294 enclose the CoA carboxyltransferase N-terminal domain; sequence VWTKCDSCGQ…PSVVESKADT (270 aa). Residues Cys-29, Cys-32, Cys-48, and Cys-51 each contribute to the Zn(2+) site. The C4-type zinc finger occupies 29-51; that stretch reads CDSCGQVLYRAELERNLEVCPKC.

Belongs to the AccD/PCCB family. Acetyl-CoA carboxylase is a heterohexamer composed of biotin carboxyl carrier protein (AccB), biotin carboxylase (AccC) and two subunits each of ACCase subunit alpha (AccA) and ACCase subunit beta (AccD). Zn(2+) serves as cofactor.

It localises to the cytoplasm. It catalyses the reaction N(6)-carboxybiotinyl-L-lysyl-[protein] + acetyl-CoA = N(6)-biotinyl-L-lysyl-[protein] + malonyl-CoA. It participates in lipid metabolism; malonyl-CoA biosynthesis; malonyl-CoA from acetyl-CoA: step 1/1. Its function is as follows. Component of the acetyl coenzyme A carboxylase (ACC) complex. Biotin carboxylase (BC) catalyzes the carboxylation of biotin on its carrier protein (BCCP) and then the CO(2) group is transferred by the transcarboxylase to acetyl-CoA to form malonyl-CoA. This chain is Acetyl-coenzyme A carboxylase carboxyl transferase subunit beta, found in Yersinia pestis (strain Pestoides F).